The sequence spans 327 residues: Serine/threonine-protein phosphatase 4 regulatory subunit ppfr-4 (327 aa).

The stretch at 141-185 (KLAVEEIRRLKLERHKKKQELKMAELRIQKQLEAVSIDEQNLREL) forms a coiled coil. The interval 271–327 (KFGHNPQNAPQSSAPAGAEAQESEEEVDDDEARAKAMRWDEYKDDHRRGWGNMHNKG) is disordered. A compositionally biased stretch (polar residues) spans 275–284 (NPQNAPQSSA). A compositionally biased stretch (acidic residues) spans 291–301 (QESEEEVDDDE). Basic and acidic residues predominate over residues 302 to 318 (ARAKAMRWDEYKDDHRR).

As to quaternary structure, serine/threonine-protein phosphatase 4 (PP4) occurs in different assemblies of the catalytic and one or more regulatory subunits. The catalytic subunit is likely to be pph-4.1.

Probable regulatory subunit of serine/threonine-protein phosphatase PP4 which may play a role in meiosis and embryonic mitosis. Probably in association with catalytic subunit pph-4.1, regulates microtubule severing during oocyte meiosis II by dephosphorylating and likely activating mei-1, a component of the katanin microtubule severing complex. This chain is Serine/threonine-protein phosphatase 4 regulatory subunit ppfr-4, found in Caenorhabditis elegans.